A 299-amino-acid polypeptide reads, in one-letter code: Delta-9 desaturase-like 1 protein (299 aa).

2 helical membrane-spanning segments follow: residues 31–51 and 55–75; these read IDIARASAVGAVHLLCLLAPF and WEALRFGVILAIVTSLSITFS. The short motif at 77 to 82 is the Histidine box-1 element; sequence HRNLTH. Residues 114-118 carry the Histidine box-2 motif; sequence HRFHH. 2 consecutive transmembrane segments (helical) span residues 174–194 and 198–218; these read IGLHILTFWTLVYLWGGLPYL and VGVGGTIGYNGTWLINSACHI. Residues 246 to 250 carry the Histidine box-3 motif; it reads HNNHH. Residues 262–282 traverse the membrane as a helical segment; the sequence is WYQVDLTWYLICFFQALGLAT.

The protein belongs to the fatty acid desaturase type 1 family. Fe cation serves as cofactor.

It is found in the endoplasmic reticulum membrane. Its pathway is lipid metabolism; polyunsaturated fatty acid biosynthesis. The chain is Delta-9 desaturase-like 1 protein from Arabidopsis thaliana (Mouse-ear cress).